A 1085-amino-acid chain; its full sequence is Mitotic checkpoint serine/threonine-protein kinase BUB1 (1085 aa).

The segment at 1–146 (MDTPENVLQM…QQQYRLFQTR (146 aa)) is necessary for kinetochore localization. The region spanning 11–182 (LEAHMQSYKG…TSKSNPGNNM (172 aa)) is the BUB1 N-terminal domain. A Nuclear localization signal motif is present at residues 58–65 (DKKKYHND). The segment at 99 to 132 (SPLYIAWAGHLEAQGELQHASAVLQRGIQNQAEP) is necessary for interaction with KNL1. The interval 229–256 (VDVEQVVMYCKEKLIRGESEFSFEELRA) is necessary for interaction with BUB3. The tract at residues 305–333 (ETSHEDLPASQERSEVNPARMGPSVGSQQ) is disordered. The segment covering 306–319 (TSHEDLPASQERSE) has biased composition (basic and acidic residues). 4 positions are modified to phosphoserine: serine 307, serine 314, serine 331, and serine 375. The tract at residues 458–476 (PSPTVHTKEALGFIMNMFQ) is essential for loading of BUBR1, MAD1L1 and MAD2L1 to kinetochores. Serine 525 carries the post-translational modification Phosphoserine. The short motif at 535–537 (KEN) is the KEN box 1 element. A disordered region spans residues 538–570 (YGLPQPKNKPTGARTFGERSVSRLPSKPKEEVP). The span at 553 to 570 (FGERSVSRLPSKPKEEVP) shows a compositional bias: basic and acidic residues. Phosphoserine occurs at positions 563, 593, and 596. The residue at position 609 (threonine 609) is a Phosphothreonine; by CDK1. The KEN box 2 motif lies at 625-627 (KEN). Serine 655, serine 661, serine 668, and serine 672 each carry phosphoserine. Positions 787–1085 (VYVHHLLGEG…LLLECKRSRK (299 aa)) constitute a Protein kinase domain. ATP is bound by residues 793-801 (LGEGAFAQV) and lysine 821. Aspartate 917 functions as the Proton acceptor in the catalytic mechanism.

It belongs to the protein kinase superfamily. Ser/Thr protein kinase family. BUB1 subfamily. As to quaternary structure, interacts with BUB3 and KNL1. Interacts (when phosphorylated) with PLK1. The BUB1-BUB3 complex interacts with MAD1L1. (Microbial infection) Interacts with SV40 Large T antigen; this interaction induces activation of a DNA damage response and promotes p53/TP53 stabilization and phosphorylation. In terms of assembly, (Microbial infection) Interacts with herpes virus 8 protein LANA1. Upon spindle-assembly checkpoint activation it is hyperphosphorylated and its kinase activity toward CDC20 is stimulated. Phosphorylation at Thr-609 is required for interaction with PLK1, phosphorylation at this site probably creates a binding site for the POLO-box domain of PLK1, thus enhancing the PLK1-BUB1 interaction. In terms of processing, ubiquitinated and degraded during mitotic exit by APC/C-Cdh1. In terms of tissue distribution, high expression in testis and thymus, less in colon, spleen, lung and small intestine. Expressed in fetal thymus, bone marrow, heart, liver, spleen and thymus. Expression is associated with cells/tissues with a high mitotic index.

Its subcellular location is the nucleus. The protein resides in the chromosome. It is found in the centromere. It localises to the kinetochore. The catalysed reaction is L-seryl-[protein] + ATP = O-phospho-L-seryl-[protein] + ADP + H(+). It catalyses the reaction L-threonyl-[protein] + ATP = O-phospho-L-threonyl-[protein] + ADP + H(+). With respect to regulation, autophosphorylated when the cells enters mitosis. Its function is as follows. Serine/threonine-protein kinase that performs 2 crucial functions during mitosis: it is essential for spindle-assembly checkpoint signaling and for correct chromosome alignment. Has a key role in the assembly of checkpoint proteins at the kinetochore, being required for the subsequent localization of CENPF, BUB1B, CENPE and MAD2L1. Required for the kinetochore localization of PLK1. Required for centromeric enrichment of AUKRB in prometaphase. Plays an important role in defining SGO1 localization and thereby affects sister chromatid cohesion. Promotes the centromeric localization of TOP2A. Acts as a substrate for anaphase-promoting complex or cyclosome (APC/C) in complex with its activator CDH1 (APC/C-Cdh1). Necessary for ensuring proper chromosome segregation and binding to BUB3 is essential for this function. Can regulate chromosome segregation in a kinetochore-independent manner. Can phosphorylate BUB3. The BUB1-BUB3 complex plays a role in the inhibition of APC/C when spindle-assembly checkpoint is activated and inhibits the ubiquitin ligase activity of APC/C by phosphorylating its activator CDC20. This complex can also phosphorylate MAD1L1. Kinase activity is essential for inhibition of APC/CCDC20 and for chromosome alignment but does not play a major role in the spindle-assembly checkpoint activity. Mediates cell death in response to chromosome missegregation and acts to suppress spontaneous tumorigenesis. This is Mitotic checkpoint serine/threonine-protein kinase BUB1 (BUB1) from Homo sapiens (Human).